The primary structure comprises 265 residues: PBSX phage terminase small subunit (265 aa).

The interval 241 to 265 (KQKAEKTDDSQEPIEIMIKRKERKS) is disordered.

It to B.subtilis YqaS and B.subtilis phage SPP1 terminase small subunit. In terms of assembly, dimer of a small and a large subunit.

Functions as a terminase. The chain is PBSX phage terminase small subunit (xtmA) from Bacillus subtilis (strain 168).